A 377-amino-acid polypeptide reads, in one-letter code: tRNA(Met) cytidine acetate ligase (377 aa).

Residues 7–20, glycine 101, asparagine 152, and arginine 179 contribute to the ATP site; that span reads ITEY…HLYH.

The protein belongs to the TmcAL family.

It localises to the cytoplasm. It carries out the reaction cytidine(34) in elongator tRNA(Met) + acetate + ATP = N(4)-acetylcytidine(34) in elongator tRNA(Met) + AMP + diphosphate. Functionally, catalyzes the formation of N(4)-acetylcytidine (ac(4)C) at the wobble position of elongator tRNA(Met), using acetate and ATP as substrates. First activates an acetate ion to form acetyladenylate (Ac-AMP) and then transfers the acetyl group to tRNA to form ac(4)C34. This chain is tRNA(Met) cytidine acetate ligase, found in Oenococcus oeni (strain ATCC BAA-331 / PSU-1).